A 352-amino-acid polypeptide reads, in one-letter code: RNA-binding protein lark (352 aa).

2 consecutive RRM domains span residues 7-77 (FKLF…AAKS) and 86-156 (TKIF…VSTS). Residues 168-185 (EQCYRCGRSGHWSKECPR) form a CCHC-type zinc finger. Disordered stretches follow at residues 187–228 (YGSA…LRDR) and 254–352 (YQTS…YAPY). Residues S198 and S201 each carry the phosphoserine modification. 2 stretches are compositionally biased toward pro residues: residues 214–224 (PYPPPPPPPPF) and 262–277 (FPPP…PLPP). Residues 279–288 (LSGSLRSCSV) are compositionally biased toward polar residues. Residues S315 and S325 each carry the phosphoserine modification. A compositionally biased stretch (basic and acidic residues) spans 320 to 334 (GYEDFSRDAFDERMI).

As to expression, expressed in the CNS and in CCAP neurons of the ventral nervous system (VNS), which control insect ecdysis.

The protein localises to the cytoplasm. It is found in the nucleus. In terms of biological role, essential RNA-binding protein. May be required for circadian repression of eclosion. Also essential for nurse cell dumping during oogenesis, the process whereby the cytoplasmic contents of nurse cells are transferred to the oocyte late in it's development. This chain is RNA-binding protein lark (lark), found in Drosophila melanogaster (Fruit fly).